We begin with the raw amino-acid sequence, 464 residues long: Armadillo repeat-containing protein 6 homolog (464 aa).

Residue Thr9 is modified to Phosphothreonine. ARM repeat units follow at residues 235–275 (AHEH…TLAV), 287–331 (GGLK…QQGV), 332–374 (APII…FDTG), and 375–418 (IAEV…ISFG).

It belongs to the ARMC6 family.

This chain is Armadillo repeat-containing protein 6 homolog, found in Drosophila melanogaster (Fruit fly).